Consider the following 62-residue polypeptide: Snaclec aspercetin subunit alpha (62 aa).

C2 and C13 are oxidised to a cystine. The C-type lectin domain occupies 9–62 (YEGHCYRFFHPPKDWADAERFCTEQAKGGALVSIQRFGEEDFVSNLITKNLQRG).

It belongs to the snaclec family. In terms of assembly, heterodimer; disulfide-linked. Expressed by the venom gland.

Its subcellular location is the secreted. In terms of biological role, snaclec that binds to von Willebrand factor (VWF) and induces its interaction with GPIbalpha (GP1BA) (via the vWF A1 domain), resulting in platelet aggregation. Intravenous injection in mice induces a dose-dependent drop in platelet count (thrombocytopenia). Pretreatment by intravenous injection by this protein in mice potentiates the hemorrhagic lesion in the skin provoked by the metalloproteinase BaP1 intradermally injected. This result is not observed when both BaP1 and this protein are injected simultaneously. This is Snaclec aspercetin subunit alpha from Bothrops asper (Terciopelo).